The primary structure comprises 146 residues: D-aminoacyl-tRNA deacylase (146 aa).

The Gly-cisPro motif, important for rejection of L-amino acids signature appears at 137-138; the sequence is GP.

The protein belongs to the DTD family. In terms of assembly, homodimer.

Its subcellular location is the cytoplasm. It catalyses the reaction glycyl-tRNA(Ala) + H2O = tRNA(Ala) + glycine + H(+). The catalysed reaction is a D-aminoacyl-tRNA + H2O = a tRNA + a D-alpha-amino acid + H(+). Its function is as follows. An aminoacyl-tRNA editing enzyme that deacylates mischarged D-aminoacyl-tRNAs. Also deacylates mischarged glycyl-tRNA(Ala), protecting cells against glycine mischarging by AlaRS. Acts via tRNA-based rather than protein-based catalysis; rejects L-amino acids rather than detecting D-amino acids in the active site. By recycling D-aminoacyl-tRNA to D-amino acids and free tRNA molecules, this enzyme counteracts the toxicity associated with the formation of D-aminoacyl-tRNA entities in vivo and helps enforce protein L-homochirality. The chain is D-aminoacyl-tRNA deacylase from Desulfatibacillum aliphaticivorans.